The sequence spans 72 residues: Translation initiation factor IF-1 (72 aa).

One can recognise an S1-like domain in the interval Met1–Lys72.

This sequence belongs to the IF-1 family. Component of the 30S ribosomal translation pre-initiation complex which assembles on the 30S ribosome in the order IF-2 and IF-3, IF-1 and N-formylmethionyl-tRNA(fMet); mRNA recruitment can occur at any time during PIC assembly.

It is found in the cytoplasm. Functionally, one of the essential components for the initiation of protein synthesis. Stabilizes the binding of IF-2 and IF-3 on the 30S subunit to which N-formylmethionyl-tRNA(fMet) subsequently binds. Helps modulate mRNA selection, yielding the 30S pre-initiation complex (PIC). Upon addition of the 50S ribosomal subunit IF-1, IF-2 and IF-3 are released leaving the mature 70S translation initiation complex. This chain is Translation initiation factor IF-1, found in Francisella tularensis subsp. tularensis (strain WY96-3418).